A 205-amino-acid chain; its full sequence is Ribosomal RNA small subunit methyltransferase G (205 aa).

Residues G66, F71, 119–120, and R135 each bind S-adenosyl-L-methionine; that span reads IE.

The protein belongs to the methyltransferase superfamily. RNA methyltransferase RsmG family.

Its subcellular location is the cytoplasm. It carries out the reaction guanosine(527) in 16S rRNA + S-adenosyl-L-methionine = N(7)-methylguanosine(527) in 16S rRNA + S-adenosyl-L-homocysteine. Functionally, specifically methylates the N7 position of guanine in position 527 of 16S rRNA. The polypeptide is Ribosomal RNA small subunit methyltransferase G (Rhizobium johnstonii (strain DSM 114642 / LMG 32736 / 3841) (Rhizobium leguminosarum bv. viciae)).